We begin with the raw amino-acid sequence, 247 residues long: NAD-dependent protein deacetylase 2 (247 aa).

In terms of domain architecture, Deacetylase sirtuin-type spans 1-247 (MDQIRQLAQW…ASVRKQIQAE (247 aa)). NAD(+) is bound by residues A23, T27, F34, R35, Q103, I105, D106, and H121. F34 contributes to the nicotinamide binding site. Nicotinamide is bound by residues I105 and D106. The active-site Proton acceptor is the H121. Zn(2+) is bound by residues C129, C132, C149, and C152. Residues T188, S189, N215, and I233 each contribute to the NAD(+) site.

Belongs to the sirtuin family. Class U subfamily. Requires Zn(2+) as cofactor.

It is found in the cytoplasm. It carries out the reaction N(6)-acetyl-L-lysyl-[protein] + NAD(+) + H2O = 2''-O-acetyl-ADP-D-ribose + nicotinamide + L-lysyl-[protein]. NAD-dependent protein deacetylase which modulates the activities of several enzymes which are inactive in their acetylated form. The sequence is that of NAD-dependent protein deacetylase 2 from Geobacillus kaustophilus (strain HTA426).